We begin with the raw amino-acid sequence, 374 residues long: MSGLGFTGVVRIAVMALLALAFLGAPAHATSRIKDLANIEGVRQNQLIGYGLVVGLNGTGDTLNNIPFTKQSLQAMLERMGVNIRGATIRTGNVAAVMVTGNLPAFATQGTRMDVTVSAMGDARSLQGGTLLVTPLLGADGNVYAVAQGSLAIGGFSAEGAAASVTKGVPTNGRIANGAIVEREIEFALNRMPNVRLALRNGDFTTAKRIAAAVNDFLGTKTAEPIDPSTVQLSIPAEFRGNVVALLTEIEQLQVEPDITAKIIIDERSGIIVMGRDVRVATVAVAQGNLTVSISESPQVSQPNPLSNGRTVMTPRTDVGVTENGNKLALVKNGVSLQELVDGLNGLGIGPRDLIGILQAIKAAGAIEADIEVM.

The N-terminal stretch at 1-29 is a signal peptide; sequence MSGLGFTGVVRIAVMALLALAFLGAPAHA. The span at 296 to 311 shows a compositional bias: polar residues; it reads ESPQVSQPNPLSNGRT. The interval 296–316 is disordered; sequence ESPQVSQPNPLSNGRTVMTPR.

The protein belongs to the FlgI family. In terms of assembly, the basal body constitutes a major portion of the flagellar organelle and consists of four rings (L,P,S, and M) mounted on a central rod.

The protein resides in the periplasm. It localises to the bacterial flagellum basal body. In terms of biological role, assembles around the rod to form the L-ring and probably protects the motor/basal body from shearing forces during rotation. This is Flagellar P-ring protein from Nitrobacter winogradskyi (strain ATCC 25391 / DSM 10237 / CIP 104748 / NCIMB 11846 / Nb-255).